Reading from the N-terminus, the 191-residue chain is Peptide methionine sulfoxide reductase (191 aa).

Disordered regions lie at residues M1–N20 and E168–G191.

This sequence belongs to the MsrA Met sulfoxide reductase family.

It carries out the reaction L-methionyl-[protein] + [thioredoxin]-disulfide + H2O = L-methionyl-(S)-S-oxide-[protein] + [thioredoxin]-dithiol. The enzyme catalyses [thioredoxin]-disulfide + L-methionine + H2O = L-methionine (S)-S-oxide + [thioredoxin]-dithiol. Functionally, has an important function as a repair enzyme for proteins that have been inactivated by oxidation. Catalyzes the reversible oxidation-reduction of methionine sulfoxide in proteins to methionine. This is Peptide methionine sulfoxide reductase from Fragaria ananassa (Strawberry).